The sequence spans 652 residues: Oligopeptide-binding protein AliB (652 aa).

A signal peptide spans 1–24 (MKKSKSKYLTLAGLVLGTGVLLSA). The N-palmitoyl cysteine moiety is linked to residue C25. The S-diacylglycerol cysteine moiety is linked to residue C25.

Belongs to the bacterial solute-binding protein 5 family.

Its subcellular location is the cell membrane. Part of the binding-protein-dependent transport system for oligopeptides; probably an oligopeptide binding protein. The polypeptide is Oligopeptide-binding protein AliB (aliB) (Streptococcus pneumoniae serotype 4 (strain ATCC BAA-334 / TIGR4)).